Consider the following 1932-residue polypeptide: DOCK-like protein 1 (1932 aa).

In terms of domain architecture, DOCKER spans 1410–1824 (LLEANRPELF…EIERYSRTLS (415 aa)). Residues 1908–1921 (STFLAGSQPNTNTD) are compositionally biased toward polar residues. Positions 1908 to 1932 (STFLAGSQPNTNTDSQHKHDYSHSG) are disordered. The span at 1922–1932 (SQHKHDYSHSG) shows a compositional bias: basic and acidic residues.

The protein belongs to the DOCK family. In terms of assembly, forms an active heterodimer with LMO1.

It is found in the cytoplasm. Its subcellular location is the mitochondrion. Functionally, forms a transiant heterodimeric complex with LMO1, that acts as a guanine nucleotide exchange factor exchange factor (GEF) for the small GTPase RHO5. DCK1, LMO1 and RHO5 relocate to mitochondria upon oxidative stress and trigger cell death. The DCK1/LMO1/RHO5 signaling module mediates mitochondrial turnover under nitrogen starvation conditions via mitophagy. The DCK1/LMO1/RHO5 signaling module plays also a function in cell wall integrity signaling. The protein is DOCK-like protein 1 of Saccharomyces cerevisiae (strain ATCC 204508 / S288c) (Baker's yeast).